Reading from the N-terminus, the 456-residue chain is RuvB-like 1 (456 aa).

The interval 1–20 (MKIEEVKSTTKTQRIASHSH) is disordered. 70 to 77 (GPPGTGKT) serves as a coordination point for ATP.

Belongs to the RuvB family. As to quaternary structure, forms homohexameric rings. Can form a dodecamer with ruvbl2 made of two stacked hexameric rings. Is a component of the RNA polymerase II holoenzyme complex. Component of the chromatin-remodeling Ino80 complex. Component of some MLL1/MLL complex.

The protein resides in the nucleus. It localises to the dynein axonemal particle. It catalyses the reaction ATP + H2O = ADP + phosphate + H(+). Has single-stranded DNA-stimulated ATPase and ATP-dependent DNA helicase (3' to 5') activity suggesting a role in nuclear processes such as recombination and transcription. Proposed core component of the chromatin remodeling Ino80 complex which exhibits DNA- and nucleosome-activated ATPase activity and catalyzes ATP-dependent nucleosome sliding. May act as a negative regulator of embryonic heart growth. The polypeptide is RuvB-like 1 (ruvbl1) (Danio rerio (Zebrafish)).